The sequence spans 471 residues: V-type ATP synthase beta chain (471 aa).

Belongs to the ATPase alpha/beta chains family.

Functionally, produces ATP from ADP in the presence of a proton gradient across the membrane. The V-type beta chain is a regulatory subunit. This chain is V-type ATP synthase beta chain, found in Deinococcus deserti (strain DSM 17065 / CIP 109153 / LMG 22923 / VCD115).